The following is a 348-amino-acid chain: tRNA N6-adenosine threonylcarbamoyltransferase (348 aa).

Residues His-116 and His-120 each coordinate Fe cation. Substrate is bound by residues 138–142 (IISGG), Asp-171, Gly-184, and Asn-282. Asp-310 serves as a coordination point for Fe cation.

Belongs to the KAE1 / TsaD family. It depends on Fe(2+) as a cofactor.

Its subcellular location is the cytoplasm. It catalyses the reaction L-threonylcarbamoyladenylate + adenosine(37) in tRNA = N(6)-L-threonylcarbamoyladenosine(37) in tRNA + AMP + H(+). In terms of biological role, required for the formation of a threonylcarbamoyl group on adenosine at position 37 (t(6)A37) in tRNAs that read codons beginning with adenine. Is involved in the transfer of the threonylcarbamoyl moiety of threonylcarbamoyl-AMP (TC-AMP) to the N6 group of A37, together with TsaE and TsaB. TsaD likely plays a direct catalytic role in this reaction. This chain is tRNA N6-adenosine threonylcarbamoyltransferase, found in Ehrlichia ruminantium (strain Gardel).